We begin with the raw amino-acid sequence, 419 residues long: UDP-N-acetylmuramoylalanine--D-glutamate ligase (419 aa).

Residue 109-115 (GSAGKTT) coordinates ATP.

This sequence belongs to the MurCDEF family.

The protein localises to the cytoplasm. It carries out the reaction UDP-N-acetyl-alpha-D-muramoyl-L-alanine + D-glutamate + ATP = UDP-N-acetyl-alpha-D-muramoyl-L-alanyl-D-glutamate + ADP + phosphate + H(+). It functions in the pathway cell wall biogenesis; peptidoglycan biosynthesis. In terms of biological role, cell wall formation. Catalyzes the addition of glutamate to the nucleotide precursor UDP-N-acetylmuramoyl-L-alanine (UMA). This is UDP-N-acetylmuramoylalanine--D-glutamate ligase from Chlamydia caviae (strain ATCC VR-813 / DSM 19441 / 03DC25 / GPIC) (Chlamydophila caviae).